A 293-amino-acid chain; its full sequence is MELLCCEGTRLAPRAGPDPRLLGDQRVLQSLLRLEERYVPRGSYFQCVQKEIKPHMRKMLAYWMLEVCEEQRCEEDVFPLAMNYLDRYLSCVPTRKAQLQLLGTVCLLLASKLRETTPLTIEKLCIYTDQAMAPWQLREWEVLVLGKLKWDLAAVIAHDFLALILHRLSLPSDRQALVKKHAQTFLALCATDYTFAMYPPSMIATGSIGAAVLGLGACSMSADELTELLAGITGTEVDCLRACQEQQIEAALRESLREAAQTAPSPVPKAPGGSSSQGPSQTSTPTDVTAIHL.

A Cyclin N-terminal domain is found at 27–152; that stretch reads VLQSLLRLEE…LVLGKLKWDL (126 aa). The segment at 257 to 293 is disordered; the sequence is REAAQTAPSPVPKAPGGSSSQGPSQTSTPTDVTAIHL. 2 positions are modified to phosphoserine: Ser-265 and Ser-280. A compositionally biased stretch (low complexity) spans 271-286; that stretch reads PGGSSSQGPSQTSTPT. Phosphothreonine is present on Thr-284.

This sequence belongs to the cyclin family. Cyclin D subfamily. Interacts with the CDK4 and CDK6 protein kinases to form a serine/threonine kinase holoenzyme complex. The cyclin subunit imparts substrate specificity to the complex. Interacts with ATF5. Interacts with EIF3K. Component of the ternary complex cyclin D/CDK4/CDKN1B required for nuclear translocation and modulation of CDK4-mediated kinase activity. Can form similar complexes with either CDKN1A or CDKN2A. Post-translationally, phosphorylation at Thr-284 by MAP kinases is required for ubiquitination and degradation by the DCX(AMBRA1) complex. Ubiquitinated by the DCX(AMBRA1) complex during the transition from G1 to S cell phase, leading to its degradation: ubiquitination is dependent on Thr-284 phosphorylation. The DCX(AMBRA1) complex represents the major regulator of CCND3 stability during the G1/S transition. Polyubiquitinated by the SCF(FBXL2) complex, leading to proteasomal degradation.

It is found in the nucleus. The protein resides in the cytoplasm. In terms of biological role, regulatory component of the cyclin D3-CDK4 (DC) complex that phosphorylates and inhibits members of the retinoblastoma (RB) protein family including RB1 and regulates the cell-cycle during G(1)/S transition. Phosphorylation of RB1 allows dissociation of the transcription factor E2F from the RB/E2F complex and the subsequent transcription of E2F target genes which are responsible for the progression through the G(1) phase. Hypophosphorylates RB1 in early G(1) phase. Cyclin D-CDK4 complexes are major integrators of various mitogenenic and antimitogenic signals. Component of the ternary complex, cyclin D3/CDK4/CDKN1B, required for nuclear translocation and activity of the cyclin D-CDK4 complex. Shows transcriptional coactivator activity with ATF5 independently of CDK4. The chain is G1/S-specific cyclin-D3 from Rattus norvegicus (Rat).